The primary structure comprises 144 residues: Large ribosomal subunit protein uL13 (144 aa).

This sequence belongs to the universal ribosomal protein uL13 family. In terms of assembly, part of the 50S ribosomal subunit.

Its function is as follows. This protein is one of the early assembly proteins of the 50S ribosomal subunit, although it is not seen to bind rRNA by itself. It is important during the early stages of 50S assembly. The chain is Large ribosomal subunit protein uL13 from Lachnoclostridium phytofermentans (strain ATCC 700394 / DSM 18823 / ISDg) (Clostridium phytofermentans).